Here is a 220-residue protein sequence, read N- to C-terminus: 7-cyano-7-deazaguanine synthase (220 aa).

10–20 (FSGGQDSTTCL) is a binding site for ATP. Residues cysteine 186, cysteine 195, cysteine 198, and cysteine 201 each coordinate Zn(2+).

Belongs to the QueC family. Homodimer. Requires Zn(2+) as cofactor.

The enzyme catalyses 7-carboxy-7-deazaguanine + NH4(+) + ATP = 7-cyano-7-deazaguanine + ADP + phosphate + H2O + H(+). It participates in purine metabolism; 7-cyano-7-deazaguanine biosynthesis. Catalyzes the ATP-dependent conversion of 7-carboxy-7-deazaguanine (CDG) to 7-cyano-7-deazaguanine (preQ(0)). The polypeptide is 7-cyano-7-deazaguanine synthase (Bacillus anthracis (strain A0248)).